The following is a 55-amino-acid chain: Preprotein translocase subunit SecG (55 aa).

Topologically, residues 1–31 (MPKNNTNENFQSGAGLIRYFNEEEIKGPALD) are cytoplasmic. A helical transmembrane segment spans residues 32–51 (PKLIIYIGIAMAVIVELAKI). The Extracellular segment spans residues 52–55 (FWPV).

Belongs to the SEC61-beta family. As to quaternary structure, component of the protein translocase complex. Heterotrimer consisting of alpha (SecY), beta (SecG) and gamma (SecE) subunits. Can form oligomers of the heterotrimer.

The protein resides in the cell membrane. Involved in protein export. The function of the beta subunit is unknown, but it may be involved in stabilization of the trimeric complex. This is Preprotein translocase subunit SecG from Picrophilus torridus (strain ATCC 700027 / DSM 9790 / JCM 10055 / NBRC 100828 / KAW 2/3).